A 397-amino-acid polypeptide reads, in one-letter code: Phosphoglycerate kinase (397 aa).

Residues 21-23, R36, 59-62, R119, and R152 contribute to the substrate site; these read DVN and HFGR. ATP is bound by residues K202, E324, and 354–357; that span reads GGDT.

Belongs to the phosphoglycerate kinase family. In terms of assembly, monomer.

The protein localises to the cytoplasm. It catalyses the reaction (2R)-3-phosphoglycerate + ATP = (2R)-3-phospho-glyceroyl phosphate + ADP. It participates in carbohydrate degradation; glycolysis; pyruvate from D-glyceraldehyde 3-phosphate: step 2/5. This Cereibacter sphaeroides (strain ATCC 17025 / ATH 2.4.3) (Rhodobacter sphaeroides) protein is Phosphoglycerate kinase.